Consider the following 696-residue polypeptide: Probable E3 ubiquitin ligase complex SCF subunit sconB (696 aa).

Residues 1–12 (MDAHELSFRDGH) show a composition bias toward basic and acidic residues. Positions 1–72 (MDAHELSFRD…HSFNTQKPIR (72 aa)) are disordered. Polar residues predominate over residues 55–69 (PGSTQDKPHSFNTQK). The F-box domain maps to 193-239 (IDFLTALPPEISFKILCYLDTTSLCKAAQVSRRWRALADDDVVWHRM). Residues 290 to 314 (SATIETAAAGSKRKPESGKEDTAMV) form a disordered region. Residues 302–313 (RKPESGKEDTAM) are compositionally biased toward basic and acidic residues. WD repeat units lie at residues 365 to 402 (GHSNGIMCLQFEDNILATGSYDATIKIWDTETGEELRT), 405 to 444 (GHQSGIRCLQFDDTKLISGSMDHTLKVWNWRTGECISTYS), 446 to 482 (HRGGVVGLHFDATILASGSVDKTVKIWNFEDKSTCLL), 484 to 525 (GHTD…RTFH), 579 to 622 (DTPS…CLRT), 623 to 662 (FFGHLEGVWALAADTLRIVSGAEDRMVKIWDPRTGKCERT), and 665 to 696 (GHSGPVTCIGLGDSRFATGSEDCEVRMYSFQT). Positions 554–596 (NVSVTSGDSPAASPQALPGFDGQTSDTPSSAFGPAFDDGRPSP) are disordered.

The protein belongs to the WD repeat MET30/SCONB/SCON-2 family. In terms of assembly, component of the SCF(sconB) E3 ubiquitin ligase complex.

The protein operates within protein modification; protein ubiquitination. Component of the SCF(sconB) E3 ubiquitin ligase complex involved in the regulation of sulfur metabolite repression, probably by mediating the inactivation or degradation of the metR transcription factor. The polypeptide is Probable E3 ubiquitin ligase complex SCF subunit sconB (sconB) (Aspergillus fumigatus (strain ATCC MYA-4609 / CBS 101355 / FGSC A1100 / Af293) (Neosartorya fumigata)).